Here is a 103-residue protein sequence, read N- to C-terminus: ATP-dependent Clp protease adapter protein ClpS 2 (103 aa).

This sequence belongs to the ClpS family. Binds to the N-terminal domain of the chaperone ClpA.

Its function is as follows. Involved in the modulation of the specificity of the ClpAP-mediated ATP-dependent protein degradation. The polypeptide is ATP-dependent Clp protease adapter protein ClpS 2 (Agrobacterium fabrum (strain C58 / ATCC 33970) (Agrobacterium tumefaciens (strain C58))).